A 614-amino-acid polypeptide reads, in one-letter code: Dolichyl-diphosphooligosaccharide--protein glycosyltransferase subunit 1A (614 aa).

The N-terminal stretch at 1-25 is a signal peptide; the sequence is MKQSSVVDLLLLLLAIALLATPAFS. Residues 26-432 lie on the Lumenal side of the membrane; that stretch reads DLVLSKVERR…QVYYKFSNIN (407 aa). Residues Asn-94 and Asn-299 are each glycosylated (N-linked (GlcNAc...) asparagine). Residue Lys-311 forms a Glycyl lysine isopeptide (Lys-Gly) (interchain with G-Cter in ubiquitin) linkage. Residue Asn-352 is glycosylated (N-linked (GlcNAc...) asparagine). A helical transmembrane segment spans residues 433–453; that stretch reads LLSEPLMLISGFFILFITCII. Topologically, residues 454–614 are cytoplasmic; it reads YTRADISISK…EDLLEFIDEI (161 aa).

Belongs to the OST1 family. In terms of assembly, component of the oligosaccharyltransferase (OST) complex.

The protein localises to the endoplasmic reticulum membrane. The protein operates within protein modification; protein glycosylation. Functionally, subunit of the oligosaccharyl transferase (OST) complex that catalyzes the initial transfer of a defined glycan (Glc(3)Man(9)GlcNAc(2) in eukaryotes) from the lipid carrier dolichol-pyrophosphate to an asparagine residue within an Asn-X-Ser/Thr consensus motif in nascent polypeptide chains, the first step in protein N-glycosylation. N-glycosylation occurs cotranslationally and the complex associates with the Sec61 complex at the channel-forming translocon complex that mediates protein translocation across the endoplasmic reticulum (ER). All subunits are required for a maximal enzyme activity. This chain is Dolichyl-diphosphooligosaccharide--protein glycosyltransferase subunit 1A (OST1A), found in Arabidopsis thaliana (Mouse-ear cress).